Reading from the N-terminus, the 71-residue chain is MAILYTSEIRDMTPAEREAELEELRTELLNSKAVKAAGGAPDNPGRISELRKTIARIKTVQREEGDLADDE.

Belongs to the universal ribosomal protein uL29 family.

The protein is Large ribosomal subunit protein uL29 (rpl29) of Halobacterium salinarum (strain ATCC 700922 / JCM 11081 / NRC-1) (Halobacterium halobium).